Here is a 296-residue protein sequence, read N- to C-terminus: Lipoyl synthase (296 aa).

7 residues coordinate [4Fe-4S] cluster: cysteine 38, cysteine 43, cysteine 49, cysteine 64, cysteine 68, cysteine 71, and serine 279. A Radical SAM core domain is found at 50-268 (WDGGCLTFMV…AEYGRSLGFK (219 aa)).

It belongs to the radical SAM superfamily. Lipoyl synthase family. Requires [4Fe-4S] cluster as cofactor.

The protein resides in the cytoplasm. It catalyses the reaction [[Fe-S] cluster scaffold protein carrying a second [4Fe-4S](2+) cluster] + N(6)-octanoyl-L-lysyl-[protein] + 2 oxidized [2Fe-2S]-[ferredoxin] + 2 S-adenosyl-L-methionine + 4 H(+) = [[Fe-S] cluster scaffold protein] + N(6)-[(R)-dihydrolipoyl]-L-lysyl-[protein] + 4 Fe(3+) + 2 hydrogen sulfide + 2 5'-deoxyadenosine + 2 L-methionine + 2 reduced [2Fe-2S]-[ferredoxin]. It participates in protein modification; protein lipoylation via endogenous pathway; protein N(6)-(lipoyl)lysine from octanoyl-[acyl-carrier-protein]: step 2/2. Functionally, catalyzes the radical-mediated insertion of two sulfur atoms into the C-6 and C-8 positions of the octanoyl moiety bound to the lipoyl domains of lipoate-dependent enzymes, thereby converting the octanoylated domains into lipoylated derivatives. The polypeptide is Lipoyl synthase (Methanocella arvoryzae (strain DSM 22066 / NBRC 105507 / MRE50)).